Consider the following 555-residue polypeptide: Sulfite reductase [ferredoxin] 2 (555 aa).

The interval 1–31 is disordered; it reads MTTARPAKARNEGQWALGNREPLNPNEEMKQ. The segment at residues 69-161 is a cross-link (3'-(S-cysteinyl)-tyrosine (Tyr-Cys)); the sequence is YTQREQGYDG…AVGLRTTEAC (93 aa). The [4Fe-4S] cluster site is built by Cys-417, Cys-423, Cys-463, and Cys-467. Cys-467 lines the siroheme pocket.

The protein belongs to the nitrite and sulfite reductase 4Fe-4S domain family. In terms of assembly, monomer. Requires siroheme as cofactor. It depends on [4Fe-4S] cluster as a cofactor.

The catalysed reaction is hydrogen sulfide + 6 oxidized [2Fe-2S]-[ferredoxin] + 3 H2O = sulfite + 6 reduced [2Fe-2S]-[ferredoxin] + 7 H(+). Its function is as follows. Catalyzes the reduction of sulfite to sulfide, a step in the biosynthesis of sulfur-containing amino acids and cofactors. In Mycolicibacterium paratuberculosis (strain ATCC BAA-968 / K-10) (Mycobacterium paratuberculosis), this protein is Sulfite reductase [ferredoxin] 2 (sir2).